The following is a 313-amino-acid chain: tRNA dimethylallyltransferase (313 aa).

9 to 16 (GPTAVGKT) contacts ATP. Residue 11 to 16 (TAVGKT) coordinates substrate. The interval 34–37 (DSMQ) is interaction with substrate tRNA.

The protein belongs to the IPP transferase family. Monomer. Requires Mg(2+) as cofactor.

It catalyses the reaction adenosine(37) in tRNA + dimethylallyl diphosphate = N(6)-dimethylallyladenosine(37) in tRNA + diphosphate. Functionally, catalyzes the transfer of a dimethylallyl group onto the adenine at position 37 in tRNAs that read codons beginning with uridine, leading to the formation of N6-(dimethylallyl)adenosine (i(6)A). This chain is tRNA dimethylallyltransferase, found in Lachnoclostridium phytofermentans (strain ATCC 700394 / DSM 18823 / ISDg) (Clostridium phytofermentans).